The primary structure comprises 157 residues: Transcription elongation factor GreB (157 aa).

It belongs to the GreA/GreB family. GreB subfamily.

Necessary for efficient RNA polymerase transcription elongation past template-encoded arresting sites. The arresting sites in DNA have the property of trapping a certain fraction of elongating RNA polymerases that pass through, resulting in locked ternary complexes. Cleavage of the nascent transcript by cleavage factors such as GreA or GreB allows the resumption of elongation from the new 3'terminus. GreB releases sequences of up to 9 nucleotides in length. This is Transcription elongation factor GreB from Salmonella typhi.